We begin with the raw amino-acid sequence, 532 residues long: Probable bifunctional tRNA threonylcarbamoyladenosine biosynthesis protein (532 aa).

The interval 1-323 is kae1; it reads MRVLGVEGTA…FRPDEVSVTW (323 aa). Residues H107 and H111 each coordinate Fe cation. Residues 128–132, D160, G173, E177, and N256 each bind L-threonylcarbamoyladenylate; that span reads NASGA. D284 is a binding site for Fe cation. In terms of domain architecture, Protein kinase spans 329–532; that stretch reads PARDPGADAV…GRYQDDPETA (204 aa). ATP contacts are provided by residues 338 to 346 and K355; that span reads VRQGAEATV. Catalysis depends on D444, which acts as the Proton acceptor; for kinase activity.

The protein in the N-terminal section; belongs to the KAE1 / TsaD family. In the C-terminal section; belongs to the protein kinase superfamily. Tyr protein kinase family. BUD32 subfamily. Component of the KEOPS complex that consists of Kae1, Bud32, Cgi121 and Pcc1; the whole complex dimerizes. Requires Fe(2+) as cofactor.

It is found in the cytoplasm. It carries out the reaction L-seryl-[protein] + ATP = O-phospho-L-seryl-[protein] + ADP + H(+). It catalyses the reaction L-threonyl-[protein] + ATP = O-phospho-L-threonyl-[protein] + ADP + H(+). The catalysed reaction is L-threonylcarbamoyladenylate + adenosine(37) in tRNA = N(6)-L-threonylcarbamoyladenosine(37) in tRNA + AMP + H(+). Its function is as follows. Required for the formation of a threonylcarbamoyl group on adenosine at position 37 (t(6)A37) in tRNAs that read codons beginning with adenine. Is a component of the KEOPS complex that is probably involved in the transfer of the threonylcarbamoyl moiety of threonylcarbamoyl-AMP (TC-AMP) to the N6 group of A37. The Kae1 domain likely plays a direct catalytic role in this reaction. The Bud32 domain probably displays kinase activity that regulates Kae1 function. The protein is Probable bifunctional tRNA threonylcarbamoyladenosine biosynthesis protein of Halobacterium salinarum (strain ATCC 700922 / JCM 11081 / NRC-1) (Halobacterium halobium).